An 81-amino-acid chain; its full sequence is Cytochrome b559 subunit alpha (81 aa).

A helical transmembrane segment spans residues 21 to 35 (VIHSITIPMLFVAGW). Heme is bound at residue H23.

This sequence belongs to the PsbE/PsbF family. As to quaternary structure, heterodimer of an alpha subunit and a beta subunit. PSII is composed of 1 copy each of membrane proteins PsbA, PsbB, PsbC, PsbD, PsbE, PsbF, PsbH, PsbI, PsbJ, PsbK, PsbL, PsbM, PsbT, PsbX, PsbY, PsbZ, Psb30/Ycf12, peripheral proteins PsbO, CyanoQ (PsbQ), PsbU, PsbV and a large number of cofactors. It forms dimeric complexes. Heme b is required as a cofactor.

Its subcellular location is the cellular thylakoid membrane. This b-type cytochrome is tightly associated with the reaction center of photosystem II (PSII). PSII is a light-driven water:plastoquinone oxidoreductase that uses light energy to abstract electrons from H(2)O, generating O(2) and a proton gradient subsequently used for ATP formation. It consists of a core antenna complex that captures photons, and an electron transfer chain that converts photonic excitation into a charge separation. The chain is Cytochrome b559 subunit alpha from Gloeothece citriformis (strain PCC 7424) (Cyanothece sp. (strain PCC 7424)).